A 181-amino-acid polypeptide reads, in one-letter code: Probable nicotinate-nucleotide adenylyltransferase (181 aa).

It belongs to the NadD family.

The enzyme catalyses nicotinate beta-D-ribonucleotide + ATP + H(+) = deamido-NAD(+) + diphosphate. It participates in cofactor biosynthesis; NAD(+) biosynthesis; deamido-NAD(+) from nicotinate D-ribonucleotide: step 1/1. Functionally, catalyzes the reversible adenylation of nicotinate mononucleotide (NaMN) to nicotinic acid adenine dinucleotide (NaAD). The sequence is that of Probable nicotinate-nucleotide adenylyltransferase from Campylobacter fetus subsp. fetus (strain 82-40).